A 181-amino-acid polypeptide reads, in one-letter code: Ferritin heavy chain (181 aa).

Residues 10 to 159 (QNYHQDCEAA…DHVTNLRKMG (150 aa)) form the Ferritin-like diiron domain. Glu27, Glu62, His65, Glu107, and Gln141 together coordinate Fe cation.

Belongs to the ferritin family. Oligomer of 24 subunits. There are two types of subunits: L (light) chain and H (heavy) chain. The major chain can be light or heavy, depending on the species and tissue type. The functional molecule forms a roughly spherical shell with a diameter of 12 nm and contains a central cavity into which the insoluble mineral iron core is deposited. As to expression, expressed in erythroblasts (at protein level). Expressed in heart, liver, spleen, lung, kidney, large intestine, small intestine, muscle, glandular stomach, ovary and oviduct.

It localises to the cytoplasm. It is found in the lysosome. Its subcellular location is the cytoplasmic vesicle. The protein resides in the autophagosome. The enzyme catalyses 4 Fe(2+) + O2 + 4 H(+) = 4 Fe(3+) + 2 H2O. Functionally, stores iron in a soluble, non-toxic, readily available form. Important for iron homeostasis. Has ferroxidase activity. Iron is taken up in the ferrous form and deposited as ferric hydroxides after oxidation. Also plays a role in delivery of iron to cells. Mediates iron uptake in capsule cells of the developing kidney. Delivery to lysosomes is mediated by the cargo receptor NCOA4 for autophagic degradation and release of iron. Inhibits translation of various mRNA species in vitro. Associates with a 35S prosome-like particle that contains non-translated mRNAs in a complex with proteins. May be involved in pre-translational regulation of some mRNA. This chain is Ferritin heavy chain, found in Anas platyrhynchos (Mallard).